The following is a 485-amino-acid chain: Glutamyl-tRNA(Gln) amidotransferase subunit A (485 aa).

Active-site charge relay system residues include K80 and S155. The Acyl-ester intermediate role is filled by S179.

This sequence belongs to the amidase family. GatA subfamily. As to quaternary structure, heterotrimer of A, B and C subunits.

It catalyses the reaction L-glutamyl-tRNA(Gln) + L-glutamine + ATP + H2O = L-glutaminyl-tRNA(Gln) + L-glutamate + ADP + phosphate + H(+). Its function is as follows. Allows the formation of correctly charged Gln-tRNA(Gln) through the transamidation of misacylated Glu-tRNA(Gln) in organisms which lack glutaminyl-tRNA synthetase. The reaction takes place in the presence of glutamine and ATP through an activated gamma-phospho-Glu-tRNA(Gln). This chain is Glutamyl-tRNA(Gln) amidotransferase subunit A, found in Leptospira borgpetersenii serovar Hardjo-bovis (strain L550).